Here is a 32-residue protein sequence, read N- to C-terminus: Photosystem I reaction center subunit XII (32 aa).

The helical transmembrane segment at 9 to 28 (VYIALVVALIPGLLAWRLAT) threads the bilayer.

The protein belongs to the PsaM family.

It is found in the cellular thylakoid membrane. The sequence is that of Photosystem I reaction center subunit XII from Nostoc sp. (strain PCC 7120 / SAG 25.82 / UTEX 2576).